The sequence spans 227 residues: Probable GTP-binding protein EngB (227 aa).

The EngB-type G domain occupies 13-188 (IGLEVAFAGR…AGVMGNWYEY (176 aa)). Residues 21-28 (GRSNAGKS), 48-52 (GRTQM), 67-70 (DLPG), 134-137 (TKAD), and 167-169 (FSA) contribute to the GTP site. The Mg(2+) site is built by serine 28 and threonine 50.

It belongs to the TRAFAC class TrmE-Era-EngA-EngB-Septin-like GTPase superfamily. EngB GTPase family. The cofactor is Mg(2+).

Functionally, necessary for normal cell division and for the maintenance of normal septation. In Psychrobacter cryohalolentis (strain ATCC BAA-1226 / DSM 17306 / VKM B-2378 / K5), this protein is Probable GTP-binding protein EngB.